We begin with the raw amino-acid sequence, 190 residues long: NADH dehydrogenase [ubiquinone] iron-sulfur protein 3 (190 aa).

It belongs to the complex I 30 kDa subunit family. As to quaternary structure, complex I is composed of at least 49 different subunits. This is a component of the iron-sulfur (IP) fragment of the enzyme.

The protein resides in the mitochondrion inner membrane. The catalysed reaction is a ubiquinone + NADH + 5 H(+)(in) = a ubiquinol + NAD(+) + 4 H(+)(out). Its function is as follows. Core subunit of the mitochondrial membrane respiratory chain NADH dehydrogenase (Complex I) that is believed to belong to the minimal assembly required for catalysis. Complex I functions in the transfer of electrons from NADH to the respiratory chain. The immediate electron acceptor for the enzyme is believed to be ubiquinone. This is NADH dehydrogenase [ubiquinone] iron-sulfur protein 3 (NAD9) from Arabidopsis thaliana (Mouse-ear cress).